Consider the following 188-residue polypeptide: Shikimate kinase (188 aa).

Residue 21–26 (GAGKTT) coordinates ATP. Position 25 (Thr-25) interacts with Mg(2+). Residues Asp-43, Arg-67, and Gly-90 each contribute to the substrate site. Position 130 (Arg-130) interacts with ATP. Position 148 (Arg-148) interacts with substrate.

This sequence belongs to the shikimate kinase family. Monomer. The cofactor is Mg(2+).

It localises to the cytoplasm. The enzyme catalyses shikimate + ATP = 3-phosphoshikimate + ADP + H(+). Its pathway is metabolic intermediate biosynthesis; chorismate biosynthesis; chorismate from D-erythrose 4-phosphate and phosphoenolpyruvate: step 5/7. Functionally, catalyzes the specific phosphorylation of the 3-hydroxyl group of shikimic acid using ATP as a cosubstrate. The protein is Shikimate kinase of Geobacillus kaustophilus (strain HTA426).